Here is a 218-residue protein sequence, read N- to C-terminus: Adapter protein MecA (218 aa).

It belongs to the MecA family. In terms of assembly, homodimer.

In terms of biological role, enables the recognition and targeting of unfolded and aggregated proteins to the ClpC protease or to other proteins involved in proteolysis. The sequence is that of Adapter protein MecA from Exiguobacterium sp. (strain ATCC BAA-1283 / AT1b).